Consider the following 257-residue polypeptide: Acetylglutamate kinase (257 aa).

Substrate contacts are provided by residues 43–44, arginine 65, and asparagine 157; that span reads GG.

Belongs to the acetylglutamate kinase family. ArgB subfamily.

It is found in the cytoplasm. The enzyme catalyses N-acetyl-L-glutamate + ATP = N-acetyl-L-glutamyl 5-phosphate + ADP. It participates in amino-acid biosynthesis; L-arginine biosynthesis; N(2)-acetyl-L-ornithine from L-glutamate: step 2/4. Catalyzes the ATP-dependent phosphorylation of N-acetyl-L-glutamate. The sequence is that of Acetylglutamate kinase from Pasteurella multocida (strain Pm70).